We begin with the raw amino-acid sequence, 337 residues long: Cytochrome P450 monooxygenase dpmpJ (337 aa).

The chain crosses the membrane as a helical span at residues 4–24; the sequence is LILHHPYASLAAGILLYFFCL. N-linked (GlcNAc...) asparagine glycosylation is present at Asn-158.

This sequence belongs to the cytochrome P450 family. Heme is required as a cofactor.

The protein localises to the membrane. It participates in secondary metabolite biosynthesis; terpenoid biosynthesis. Its function is as follows. Cytochrome P450 monooxygenase; part of the gene cluster that mediates the biosynthesis of diterpenoid pyrones. The first step of the pathway is the synthesis of the alpha-pyrone moiety by the polyketide synthase dpmpA via condensation of one acetyl-CoA starter unit with 3 malonyl-CoA units and 2 methylations. The alpha-pyrone is then combined with geranylgeranyl pyrophosphate (GGPP) formed by the GGPP synthase dpmpD through the action of the prenyltransferase dpmpC to yield a linear alpha-pyrone diterpenoid. Subsequent steps in the diterpenoid pyrone biosynthetic pathway involve the decalin core formation, which is initiated by the epoxidation of the C10-C11 olefin by the FAD-dependent oxidoreductase dpmpE, and is followed by a cyclization cascade catalyzed by the terpene cyclase dpmpB. The short chain dehydrogenase/reductase dpmpG then oxidizes the 8S hydroxy group to a ketone and the short chain dehydrogenase/reductase dpmpH reduces the ketone to the 8R hydroxy group to yield higginsianin B. Higginsianin B is further methylated by the methyltransferase dpmpI to produce the intermediate named FDDP B. The cytochrome P450 monooxygenase dpmpJ then oxidizes the C-26 methyl to primary alcohol, producing the final diterpenoid pyrone with a C-26 primary alcohol on the gamma-pyrone moiety named FDDP C. The sequence is that of Cytochrome P450 monooxygenase dpmpJ from Macrophomina phaseolina (strain MS6) (Charcoal rot fungus).